A 387-amino-acid polypeptide reads, in one-letter code: Capsid protein (387 aa).

Residues 1 to 33 show a composition bias toward basic residues; it reads MARTKSKPRKRTTVRKARRSVKRRTTTKGTKRK. Disordered stretches follow at residues 1–47 and 365–387; these read MART…RGVA and KSAK…REFN. Short sequence motifs (nuclear localization signal) lie at residues 8–15 and 30–37; these read PRKRTTVR and TKRKTAGD. A compositionally biased stretch (low complexity) spans 370–379; it reads NDQLNNNQDA.

The protein localises to the host nucleus. The protein resides in the virion. In terms of biological role, self-assembles to form the virion icosahedral capsid. In Chaetoceros protobacilladnavirus 2 (Chaetoceros sp. DNA virus 7), this protein is Capsid protein.